The sequence spans 231 residues: Protein OPG061 (231 aa).

It belongs to the orthopoxvirus OPG058 family.

Its subcellular location is the host nucleus. The protein resides in the host nucleolus. The polypeptide is Protein OPG061 (OPG061) (Cynomys gunnisoni (Gunnison's prairie dog)).